The sequence spans 248 residues: Protein FAM133A (248 aa).

Residues 68 to 80 (NWKKELEKSREKL) are compositionally biased toward basic and acidic residues. The disordered stretch occupies residues 68 to 248 (NWKKELEKSR…KKSGSSHKSR (181 aa)). Basic residues predominate over residues 90-102 (KRERKKKRKKKSC). Positions 103–118 (RSSSSSSSSDSSSSSS) are enriched in low complexity. Basic residues predominate over residues 127-138 (QGKRRKKKKNRS). 3 stretches are compositionally biased toward basic and acidic residues: residues 147 to 156 (HESESESKES), 163 to 175 (SKDE…DVRS), and 211 to 220 (RCEEREQAKE). Over residues 221 to 248 (KVKKKKKKQHKKHSKKKKKKSGSSHKSR) the composition is skewed to basic residues.

It belongs to the FAM133 family.

This is Protein FAM133A (FAM133A) from Homo sapiens (Human).